We begin with the raw amino-acid sequence, 163 residues long: Shikimate kinase (163 aa).

G10–T15 lines the ATP pocket. Position 14 (T14) interacts with Mg(2+). Positions 28, 52, and 75 each coordinate substrate. Residue R116 participates in ATP binding. R134 contacts substrate. Position 151 (R151) interacts with ATP.

It belongs to the shikimate kinase family. In terms of assembly, monomer. Mg(2+) is required as a cofactor.

It localises to the cytoplasm. It carries out the reaction shikimate + ATP = 3-phosphoshikimate + ADP + H(+). It functions in the pathway metabolic intermediate biosynthesis; chorismate biosynthesis; chorismate from D-erythrose 4-phosphate and phosphoenolpyruvate: step 5/7. Its function is as follows. Catalyzes the specific phosphorylation of the 3-hydroxyl group of shikimic acid using ATP as a cosubstrate. The chain is Shikimate kinase from Streptococcus pyogenes serotype M49 (strain NZ131).